Consider the following 101-residue polypeptide: UPF0473 protein EF_1204 (101 aa).

The protein belongs to the UPF0473 family.

The protein is UPF0473 protein EF_1204 of Enterococcus faecalis (strain ATCC 700802 / V583).